The sequence spans 328 residues: Malate dehydrogenase (328 aa).

12–18 (GAAGQIA) contributes to the NAD(+) binding site. 2 residues coordinate substrate: Arg-93 and Arg-99. NAD(+) contacts are provided by residues Asn-106, Gln-113, and 130–132 (VGN). Asn-132 and Arg-163 together coordinate substrate. The active-site Proton acceptor is His-188.

Belongs to the LDH/MDH superfamily. MDH type 2 family.

The catalysed reaction is (S)-malate + NAD(+) = oxaloacetate + NADH + H(+). Functionally, catalyzes the reversible oxidation of malate to oxaloacetate. The polypeptide is Malate dehydrogenase (Burkholderia ambifaria (strain ATCC BAA-244 / DSM 16087 / CCUG 44356 / LMG 19182 / AMMD) (Burkholderia cepacia (strain AMMD))).